The primary structure comprises 240 residues: Zinc import ATP-binding protein ZnuC (240 aa).

An ABC transporter domain is found at 1–219; sequence MSLLSIAALD…PAYRAMFGLD (219 aa). 36–43 contributes to the ATP binding site; it reads GPNGSGKT.

Belongs to the ABC transporter superfamily. Zinc importer (TC 3.A.1.15.5) family. The complex is composed of two ATP-binding proteins (ZnuC), two transmembrane proteins (ZnuB) and a solute-binding protein (ZnuA).

The protein localises to the cell inner membrane. It carries out the reaction Zn(2+)(out) + ATP(in) + H2O(in) = Zn(2+)(in) + ADP(in) + phosphate(in) + H(+)(in). In terms of biological role, part of the ABC transporter complex ZnuABC involved in zinc import. Responsible for energy coupling to the transport system. This chain is Zinc import ATP-binding protein ZnuC, found in Chromohalobacter salexigens (strain ATCC BAA-138 / DSM 3043 / CIP 106854 / NCIMB 13768 / 1H11).